Here is a 400-residue protein sequence, read N- to C-terminus: MSSKLVLVLNCGSSSLKFAIINPENGEEFLSGLAECFNLPEARLKWKMDGQKHEAALGAGAAHSEALNFIVNTILAEKPELSQQIAAIGHRIVHGGEKFTKSVVITDEVIKGIEAAIPFAPLHNPAHLIGIEEARKAFPHLINKMVAVFDTAFHQTMPEEAYLYALPYSLYKDHSIRRYGAHGTSHFFVSREAAKMLNKPVDELNVITCHLGNGGSVSAIVNGKCVDTSMGLTPLEGLVMGTRSGDIDPAIVFHLHDTLGMSVEDINKLLTKESGLLGLTEVTSDCRYVEDNYETKADAKRAMDVYCHRLAKYIGSYCALMEGRLDAIIFTGGIGENAAMVRELSLKKLALLGFEVDHQRNLDARFGKSGTITTDNSRLAVVIPTNEELVIAQDASRLTA.

Asn-10 contributes to the Mg(2+) binding site. Lys-17 contributes to the ATP binding site. Arg-91 contributes to the substrate binding site. Asp-150 (proton donor/acceptor) is an active-site residue. ATP contacts are provided by residues 210-214 (HLGNG), 285-287 (DCR), and 333-337 (GIGEN). Glu-387 contacts Mg(2+).

The protein belongs to the acetokinase family. As to quaternary structure, homodimer. Mg(2+) serves as cofactor. Requires Mn(2+) as cofactor.

The protein resides in the cytoplasm. It catalyses the reaction acetate + ATP = acetyl phosphate + ADP. The protein operates within metabolic intermediate biosynthesis; acetyl-CoA biosynthesis; acetyl-CoA from acetate: step 1/2. Catalyzes the formation of acetyl phosphate from acetate and ATP. Can also catalyze the reverse reaction. The sequence is that of Acetate kinase from Proteus mirabilis (strain HI4320).